The primary structure comprises 304 residues: Lipoprotein signal peptidase (304 aa).

Helical transmembrane passes span 28–48 (IKIK…IVFV), 86–106 (PAVP…TFIF), and 112–132 (LIVL…DRSV). Catalysis depends on residues D148 and D163. The helical transmembrane segment at 163–183 (DICIVTGFALIFLTFVVDIFL) threads the bilayer.

The protein belongs to the peptidase A8 family.

The protein localises to the cell membrane. The enzyme catalyses Release of signal peptides from bacterial membrane prolipoproteins. Hydrolyzes -Xaa-Yaa-Zaa-|-(S,diacylglyceryl)Cys-, in which Xaa is hydrophobic (preferably Leu), and Yaa (Ala or Ser) and Zaa (Gly or Ala) have small, neutral side chains.. Its pathway is protein modification; lipoprotein biosynthesis (signal peptide cleavage). Its function is as follows. This protein specifically catalyzes the removal of signal peptides from prolipoproteins. This chain is Lipoprotein signal peptidase, found in Mycoplasmoides gallisepticum (strain R(low / passage 15 / clone 2)) (Mycoplasma gallisepticum).